Consider the following 294-residue polypeptide: 4-hydroxy-tetrahydrodipicolinate synthase (294 aa).

Residue threonine 47 coordinates pyruvate. The Proton donor/acceptor role is filled by tyrosine 135. Lysine 163 functions as the Schiff-base intermediate with substrate in the catalytic mechanism. Pyruvate is bound at residue threonine 205.

The protein belongs to the DapA family. Homotetramer; dimer of dimers.

It localises to the cytoplasm. The enzyme catalyses L-aspartate 4-semialdehyde + pyruvate = (2S,4S)-4-hydroxy-2,3,4,5-tetrahydrodipicolinate + H2O + H(+). It functions in the pathway amino-acid biosynthesis; L-lysine biosynthesis via DAP pathway; (S)-tetrahydrodipicolinate from L-aspartate: step 3/4. Its function is as follows. Catalyzes the condensation of (S)-aspartate-beta-semialdehyde [(S)-ASA] and pyruvate to 4-hydroxy-tetrahydrodipicolinate (HTPA). This chain is 4-hydroxy-tetrahydrodipicolinate synthase, found in Rickettsia peacockii (strain Rustic).